Here is a 344-residue protein sequence, read N- to C-terminus: 3-isopropylmalate dehydrogenase (344 aa).

74-87 contributes to the NAD(+) binding site; sequence GPKWDALPRKIRPE. Substrate-binding residues include Arg-94, Arg-104, Arg-132, and Asp-217. 3 residues coordinate Mg(2+): Asp-217, Asp-241, and Asp-245. Residue 274–286 coordinates NAD(+); sequence GSAPDIAGKGIAN.

This sequence belongs to the isocitrate and isopropylmalate dehydrogenases family. LeuB type 1 subfamily. Homodimer. It depends on Mg(2+) as a cofactor. The cofactor is Mn(2+).

The protein localises to the cytoplasm. It catalyses the reaction (2R,3S)-3-isopropylmalate + NAD(+) = 4-methyl-2-oxopentanoate + CO2 + NADH. Its pathway is amino-acid biosynthesis; L-leucine biosynthesis; L-leucine from 3-methyl-2-oxobutanoate: step 3/4. Functionally, catalyzes the oxidation of 3-carboxy-2-hydroxy-4-methylpentanoate (3-isopropylmalate) to 3-carboxy-4-methyl-2-oxopentanoate. The product decarboxylates to 4-methyl-2 oxopentanoate. The protein is 3-isopropylmalate dehydrogenase (leuB) of Thermus aquaticus.